We begin with the raw amino-acid sequence, 304 residues long: ATP phosphoribosyltransferase (304 aa).

Belongs to the ATP phosphoribosyltransferase family. Long subfamily. Mg(2+) is required as a cofactor.

It is found in the cytoplasm. The enzyme catalyses 1-(5-phospho-beta-D-ribosyl)-ATP + diphosphate = 5-phospho-alpha-D-ribose 1-diphosphate + ATP. Its pathway is amino-acid biosynthesis; L-histidine biosynthesis; L-histidine from 5-phospho-alpha-D-ribose 1-diphosphate: step 1/9. With respect to regulation, feedback inhibited by histidine. In terms of biological role, catalyzes the condensation of ATP and 5-phosphoribose 1-diphosphate to form N'-(5'-phosphoribosyl)-ATP (PR-ATP). Has a crucial role in the pathway because the rate of histidine biosynthesis seems to be controlled primarily by regulation of HisG enzymatic activity. The polypeptide is ATP phosphoribosyltransferase (Xanthomonas campestris pv. campestris (strain B100)).